Reading from the N-terminus, the 477-residue chain is MANMQGLVERLERAVSRLESLSAESHRPPGNCGEVNGVIGGVAPSVEAFDKLMDSMVAEFLKNSRILAGDVETHAEMVHSAFQAQRAFLLMASQYQQPHENDVAALLKPISEKIQEIQTFRERNRGSNMFNHLSAVSESIPALGWIAVSPKPGPYVKEMNDAATFYTNRVLKDYKHSDLRHVDWVKSYLNIWSELQAYIKEHHTTGLTWSKTGPVASTVSAFSVLSSGPGLPPPPPPPPPPGPPPLLENEGKKEESSPSRSALFAQLNQGEAITKGLRHVTDDQKTYKNPSLRAQGGQTRSPTKSHTPSPTSPKSYPSQKHAPVLELEGKKWRVEYQEDRNDLVISETELKQVAYIFKCEKSTLQIKGKVNSIIIDNCKKLGLVFDNVVGIVEVINSQDIQIQVMGRVPTISINKTEGCHIYLSEDALDCEIVSAKSSEMNILIPQDGDYREFPIPEQFKTAWDGSKLITEPAEIMA.

Alanine 2 carries the post-translational modification N-acetylalanine. Disordered regions lie at residues 224–261 (VLSSGPGLPPPPPPPPPPGPPPLLENEGKKEESSPSRS) and 274–323 (TKGL…KHAP). Residues 230–246 (GLPPPPPPPPPPGPPPL) show a composition bias toward pro residues. Residues serine 301 and serine 309 each carry the phosphoserine modification. The segment covering 301-320 (SPTKSHTPSPTSPKSYPSQK) has biased composition (low complexity). The region spanning 317–455 (PSQKHAPVLE…QDGDYREFPI (139 aa)) is the C-CAP/cofactor C-like domain.

Belongs to the CAP family.

The protein localises to the cell membrane. Its function is as follows. Involved in the regulation of actin polymerization. This Pongo abelii (Sumatran orangutan) protein is Adenylyl cyclase-associated protein 2 (CAP2).